A 291-amino-acid chain; its full sequence is Lipoyl synthase, mitochondrial (291 aa).

Positions 45, 50, 56, 71, 75, 78, and 283 each coordinate [4Fe-4S] cluster. Positions 57-272 (WGEGTATFMI…EKIGKELGFR (216 aa)) constitute a Radical SAM core domain.

The protein belongs to the radical SAM superfamily. Lipoyl synthase family. [4Fe-4S] cluster is required as a cofactor.

The protein localises to the mitochondrion. It catalyses the reaction [[Fe-S] cluster scaffold protein carrying a second [4Fe-4S](2+) cluster] + N(6)-octanoyl-L-lysyl-[protein] + 2 oxidized [2Fe-2S]-[ferredoxin] + 2 S-adenosyl-L-methionine + 4 H(+) = [[Fe-S] cluster scaffold protein] + N(6)-[(R)-dihydrolipoyl]-L-lysyl-[protein] + 4 Fe(3+) + 2 hydrogen sulfide + 2 5'-deoxyadenosine + 2 L-methionine + 2 reduced [2Fe-2S]-[ferredoxin]. The protein operates within protein modification; protein lipoylation via endogenous pathway; protein N(6)-(lipoyl)lysine from octanoyl-[acyl-carrier-protein]: step 2/2. In terms of biological role, catalyzes the radical-mediated insertion of two sulfur atoms into the C-6 and C-8 positions of the octanoyl moiety bound to the lipoyl domains of lipoate-dependent enzymes, thereby converting the octanoylated domains into lipoylated derivatives. The sequence is that of Lipoyl synthase, mitochondrial from Nematostella vectensis (Starlet sea anemone).